The primary structure comprises 397 residues: MAKEKFDRSKPHVNIGTIGHVDHGKTTLTAAITNTLNTRYGTGAAVAFDKIDKAPEERERGITISTSHVEYETPNRHYAHVDCPGHADYVKNMITGAAQMDGAILVCSAADGPMPQTREHILLSRQVGVPYIVVFLNKCDMVDDEELLELVEMEVRDLLNEYEFPGDDTPIVRGSALQALNDPAGPWGDKIVELFEHIDTYIPEPTRAIDKSFLMPVEDVFSITGRGTVATGRVERGIIKVQDEVELVGLQEDSRKIVVTGVEMFRKLLDQAQAGDNVGLLLRGIQRTEIQRGQVLCKPGTIKPHTKFKAEVYVLKKEEGGRHTPFFDGYRPQFYFRTTDVTGATKLPDGMEMVMPGDNVTMEIDLIHPIAIEEGLRFAIREGGRTVGSGVVASIIE.

One can recognise a tr-type G domain in the interval 10–206; that stretch reads KPHVNIGTIG…HIDTYIPEPT (197 aa). Positions 19 to 26 are G1; it reads GHVDHGKT. Residue 19-26 participates in GTP binding; sequence GHVDHGKT. Mg(2+) is bound at residue T26. Residues 61 to 65 are G2; it reads GITIS. Residues 82-85 form a G3 region; it reads DCPG. Residues 82–86 and 137–140 each bind GTP; these read DCPGH and NKCD. Positions 137–140 are G4; sequence NKCD. The G5 stretch occupies residues 175–177; that stretch reads SAL.

It belongs to the TRAFAC class translation factor GTPase superfamily. Classic translation factor GTPase family. EF-Tu/EF-1A subfamily. Monomer.

It localises to the cytoplasm. It carries out the reaction GTP + H2O = GDP + phosphate + H(+). In terms of biological role, GTP hydrolase that promotes the GTP-dependent binding of aminoacyl-tRNA to the A-site of ribosomes during protein biosynthesis. The sequence is that of Elongation factor Tu from Alkaliphilus oremlandii (strain OhILAs) (Clostridium oremlandii (strain OhILAs)).